The following is a 144-amino-acid chain: DNA-directed RNA polymerases II and V subunit 6B (144 aa).

A compositionally biased stretch (acidic residues) spans 1–32; it reads MADDDYNEVDDLGYEDEPAEPEIEEGVEEDAD. Residues 1-62 form a disordered region; sequence MADDDYNEVD…EPVQRPRKTS (62 aa). Residues 46-56 show a composition bias toward basic and acidic residues; the sequence is TEDKVETEPVQ.

Belongs to the archaeal Rpo6/eukaryotic RPB6 RNA polymerase subunit family. Component of the RNA polymerase II and V complexes.

The protein localises to the nucleus. Its function is as follows. DNA-dependent RNA polymerase catalyzes the transcription of DNA into RNA using the four ribonucleoside triphosphates as substrates. Component of RNA polymerase II which synthesizes mRNA precursors and many functional non-coding RNAs. Pol II is the central component of the basal RNA polymerase II transcription machinery. It is composed of mobile elements that move relative to each other. Component of RNA polymerase V which mediates RNA-directed DNA methylation-dependent (RdDM) transcriptional gene silencing (TGS) of endogenous repeated sequences, including transposable elements. The protein is DNA-directed RNA polymerases II and V subunit 6B (NRPB6B) of Arabidopsis thaliana (Mouse-ear cress).